Consider the following 528-residue polypeptide: GMP synthase [glutamine-hydrolyzing] (528 aa).

The Glutamine amidotransferase type-1 domain maps to 13–204 (AIVILDFGSQ…VYDICSCEPD (192 aa)). The active-site Nucleophile is Cys-90. Residues His-178 and Glu-180 contribute to the active site. A GMPS ATP-PPase domain is found at 205-403 (WTTNLFIDEA…LGLPDEIVRR (199 aa)). 232–238 (SGGVDSS) contributes to the ATP binding site.

Homodimer.

The enzyme catalyses XMP + L-glutamine + ATP + H2O = GMP + L-glutamate + AMP + diphosphate + 2 H(+). It participates in purine metabolism; GMP biosynthesis; GMP from XMP (L-Gln route): step 1/1. Catalyzes the synthesis of GMP from XMP. This is GMP synthase [glutamine-hydrolyzing] from Prochlorococcus marinus (strain NATL2A).